Reading from the N-terminus, the 72-residue chain is UPF0352 protein NTHI1007 (72 aa).

Belongs to the UPF0352 family.

This Haemophilus influenzae (strain 86-028NP) protein is UPF0352 protein NTHI1007.